Reading from the N-terminus, the 541-residue chain is Solute carrier family 2, facilitated glucose transporter member 10 (541 aa).

Residues 1-15 (MGHSPPVLPLCASVS) lie on the Cytoplasmic side of the membrane. Residues 16 to 36 (LLGGLTFGYELAVISGALLPL) form a helical membrane-spanning segment. At 37–48 (QLDFGLSCLEQE) the chain is on the extracellular side. A helical membrane pass occupies residues 49–69 (FLVGSLLLGALLASLVGGFLI). The Cytoplasmic portion of the chain corresponds to 70 to 77 (DCYGRKQA). Residues 78–98 (ILGSNLVLLAGSLTLGLAGSL) traverse the membrane as a helical segment. Residues 99–106 (AWLVLGRA) lie on the Extracellular side of the membrane. The chain crosses the membrane as a helical span at residues 107-127 (VVGFAISLSSMACCIYVSELV). The Cytoplasmic portion of the chain corresponds to 128–134 (GPRQRGV). The helical transmembrane segment at 135–155 (LVSLYEAGITVGILLSYALNY) threads the bilayer. The Extracellular portion of the chain corresponds to 156 to 166 (ALAGTPWGWRH). A helical transmembrane segment spans residues 167 to 187 (MFGWATAPAVLQSLSLLFLPA). At 188–233 (GTDETATHKDLIPLQGGEAPKLGPGRPRYSFLDLFRARDNMRGRTT) the chain is on the cytoplasmic side. A helical membrane pass occupies residues 234 to 254 (VGLGLVLFQQLTGQPNVLCYA). 242–243 (QQ) is a binding site for D-glucose. At 255–269 (STIFSSVGFHGGSSA) the chain is on the extracellular side. The chain crosses the membrane as a helical span at residues 270-290 (VLASVGLGAVKVAATLTAMGL). The Cytoplasmic portion of the chain corresponds to 291-298 (VDRAGRRA). A helical membrane pass occupies residues 299 to 319 (LLLAGCALMALSVSGIGLVSF). Residues 320-414 (AVPMDSGPSC…HALLRWTALL (95 aa)) lie on the Extracellular side of the membrane. The N-linked (GlcNAc...) asparagine glycan is linked to N334. The interval 340–388 (GLPGDSGLLQDSSLPPIPRTNEDQREPILSTAKKTKPHPRSGDPSAPPR) is disordered. The helical transmembrane segment at 415–435 (CLMVFVSAFSFGFGPVTWLVL) threads the bilayer. W432 serves as a coordination point for D-glucose. Residues 436-445 (SEIYPVEIRG) are Cytoplasmic-facing. Residues 446-466 (RAFAFCNSFNWAANLFISLSF) traverse the membrane as a helical segment. The Extracellular portion of the chain corresponds to 467–476 (LDLIGTIGLS). A helical membrane pass occupies residues 477–497 (WTFLLYGLTAVLGLGFIYLFV). At 498-541 (PETKGQSLAEIDQQFQKRRFTLSFGHRQNSTGIPYSRIEISAAS) the chain is on the cytoplasmic side.

It belongs to the major facilitator superfamily. Sugar transporter (TC 2.A.1.1) family. Glucose transporter subfamily. In terms of tissue distribution, widely expressed; highest levels in liver and pancreas.

It localises to the endomembrane system. The protein localises to the cytoplasm. It is found in the perinuclear region. The catalysed reaction is D-glucose(out) = D-glucose(in). Facilitative glucose transporter required for the development of the cardiovascular system. The chain is Solute carrier family 2, facilitated glucose transporter member 10 from Homo sapiens (Human).